We begin with the raw amino-acid sequence, 173 residues long: Photosystem I assembly protein Ycf3 (173 aa).

3 TPR repeats span residues 35–68 (AYVY…EDNP), 72–105 (GETL…NSNQ), and 120–153 (GRIA…NPGG).

It belongs to the Ycf3 family.

The protein resides in the cellular thylakoid membrane. Its function is as follows. Essential for the assembly of the photosystem I (PSI) complex. May act as a chaperone-like factor to guide the assembly of the PSI subunits. The protein is Photosystem I assembly protein Ycf3 of Parasynechococcus marenigrum (strain WH8102).